The primary structure comprises 500 residues: Glycerol kinase (500 aa).

Residue threonine 13 coordinates ADP. The ATP site is built by threonine 13, threonine 14, and serine 15. Threonine 13 lines the sn-glycerol 3-phosphate pocket. Arginine 17 contacts ADP. Sn-glycerol 3-phosphate-binding residues include arginine 83, glutamate 84, tyrosine 135, and aspartate 245. Positions 83, 84, 135, 245, and 246 each coordinate glycerol. Positions 267 and 310 each coordinate ADP. The ATP site is built by threonine 267, glycine 310, glutamine 314, and glycine 411. Residues glycine 411 and asparagine 415 each contribute to the ADP site.

Belongs to the FGGY kinase family. As to quaternary structure, homotetramer and homodimer (in equilibrium).

The catalysed reaction is glycerol + ATP = sn-glycerol 3-phosphate + ADP + H(+). Its pathway is polyol metabolism; glycerol degradation via glycerol kinase pathway; sn-glycerol 3-phosphate from glycerol: step 1/1. Activated by phosphorylation and inhibited by fructose 1,6-bisphosphate (FBP). Key enzyme in the regulation of glycerol uptake and metabolism. Catalyzes the phosphorylation of glycerol to yield sn-glycerol 3-phosphate. This is Glycerol kinase from Carboxydothermus hydrogenoformans (strain ATCC BAA-161 / DSM 6008 / Z-2901).